Here is a 177-residue protein sequence, read N- to C-terminus: Alkyl hydroperoxide reductase AhpD (177 aa).

Cys-130 functions as the Proton donor in the catalytic mechanism. The cysteines at positions 130 and 133 are disulfide-linked. Residue Cys-133 is the Cysteine sulfenic acid (-SOH) intermediate of the active site.

It belongs to the AhpD family. Homotrimer.

It carries out the reaction N(6)-[(R)-dihydrolipoyl]-L-lysyl-[lipoyl-carrier protein] + a hydroperoxide = N(6)-[(R)-lipoyl]-L-lysyl-[lipoyl-carrier protein] + an alcohol + H2O. In terms of biological role, antioxidant protein with alkyl hydroperoxidase activity. Required for the reduction of the AhpC active site cysteine residues and for the regeneration of the AhpC enzyme activity. The protein is Alkyl hydroperoxide reductase AhpD of Mycolicibacterium smegmatis (strain ATCC 700084 / mc(2)155) (Mycobacterium smegmatis).